We begin with the raw amino-acid sequence, 419 residues long: D(4) dopamine receptor (419 aa).

The Extracellular segment spans residues 1-29; that stretch reads MGNRSTADADGLLAGRGPAAGASAGASAG. The N-linked (GlcNAc...) asparagine glycan is linked to Asn3. A helical transmembrane segment spans residues 30-50; the sequence is LAGQGAAALVGGVLLIGAVLA. Over 51–71 the chain is Cytoplasmic; it reads GNSLVCVSVATERALQTPTNS. A helical transmembrane segment spans residues 72 to 92; sequence FIVSLAAADLLLALLVLPLFV. A Na(+)-binding site is contributed by Asp80. Residues 93–110 are Extracellular-facing; it reads YSEVQGGAWLLSPRLCDA. The cysteines at positions 108 and 185 are disulfide-linked. The helical transmembrane segment at 111–131 threads the bilayer; it reads LMAMDVMLCTASIFNLCAISV. Asp115 serves as a coordination point for (2R,3R)-nemonapride. Ser122 contacts Na(+). Residues 132-152 are Cytoplasmic-facing; sequence DRFVAVAVPLRYNRQGGSRRQ. The helical transmembrane segment at 153–173 threads the bilayer; that stretch reads LLLIGATWLLSAAVAAPVLCG. The Extracellular portion of the chain corresponds to 174–192; it reads LNDVRGRDPAVCRLEDRDY. Residues 193 to 213 form a helical membrane-spanning segment; the sequence is VVYSSVCSFFLPCPLMLLLYW. Ser196 is a (2R,3R)-nemonapride binding site. Residues 214–346 are Cytoplasmic-facing; it reads ATFRGLQRWE…ITGRERKAMR (133 aa). The disordered stretch occupies residues 230–264; that stretch reads LHGRAPRRPSGPGPPSPTPPAPRLPQDPCGPDCAP. Over residues 238-254 the composition is skewed to pro residues; sequence PSGPGPPSPTPPAPRLP. A 1; approximate repeat occupies 249 to 264; the sequence is PAPRLPQDPCGPDCAP. Residues 249-312 form a 4 X 16 AA approximate tandem repeats of [PA]-A-P-G-L-P-[PQR]-[DG]-P-C-G-P-D-C-A-P region; sequence PAPRLPQDPC…PDPCGSNCAP (64 aa). Tandem repeats lie at residues 265 to 280 and 281 to 296. The 4; approximate repeat unit spans residues 297–312; it reads PAPGLPPDPCGSNCAP. The segment at 317–336 is disordered; that stretch reads RAAALPPQTPPQTRRRRRAK. Residues 347–367 traverse the membrane as a helical segment; the sequence is VLPVVVGAFLLCWTPFFVVHI. Residues 368–382 are Extracellular-facing; that stretch reads TQALCPACSVPPRLV. A disulfide bridge connects residues Cys372 and Cys375. The helical transmembrane segment at 383 to 403 threads the bilayer; the sequence is SAVTWLGYVNSALNPVIYTVF. Over 404–419 the chain is Cytoplasmic; sequence NAEFRNVFRKALRACC. A lipid anchor (S-palmitoyl cysteine) is attached at Cys419.

Belongs to the G-protein coupled receptor 1 family. Forms homo- and heterooligomers with DRD2. D4.7 allele exhibits higher affinity for homodimers compared to DRD2 heterodimers, while alleles D42. and 4.4 have similar affinities for both. The interaction with DRD2 may modulate agonist-induced downstream signaling. Interacts with CLIC6. Interacts with GPRASP1. May interact with ADORA2A. Interacts with KLHL12. In terms of processing, polyubiquitinated by the BCR(KLHL12) E3 ubiquitin ligase complex: polyubiquitination does not lead to degradation of DRD4 protein. Palmitoylated. Palmitoylation of the C-terminal Cys is important for normal expression at the cell membrane. Highly expressed in retina. Detected at much lower levels in brain, in amygdala, thalamus, hypothalamus, cerebellum and pituitary.

It localises to the cell membrane. Its activity is regulated as follows. Signaling in response to agonists such as dopamine, epinephrine and norepinephrine is modulated by Na(+); lower Na(+) levels result in higher receptor activity (in vitro). Dopamine receptor responsible for neuronal signaling in the mesolimbic system of the brain, an area of the brain that regulates emotion and complex behavior. Activated by dopamine, but also by epinephrine and norepinephrine, and by numerous synthetic agonists and drugs. Agonist binding triggers signaling via G proteins that inhibit adenylyl cyclase. Modulates the circadian rhythm of contrast sensitivity by regulating the rhythmic expression of NPAS2 in the retinal ganglion cells. This is D(4) dopamine receptor (DRD4) from Homo sapiens (Human).